Reading from the N-terminus, the 474-residue chain is Ribulose bisphosphate carboxylase/oxygenase activase, chloroplastic (474 aa).

Residues 1 to 58 (MAAAVSTVGAINRAPLSLNGSGSGAVSAPASTFLGKKVVTVSRFAQSNKKSNGSFKVL) constitute a chloroplast transit peptide. Thr78 is subject to Phosphothreonine; by CK2. 165–172 (GGKGQGKS) contributes to the ATP binding site. Thr283 carries the phosphothreonine modification.

Belongs to the RuBisCO activase family. Post-translationally, phosphorylated at Thr-78 by CK2.

The protein localises to the plastid. It is found in the chloroplast stroma. It localises to the chloroplast. The protein resides in the plastoglobule. In terms of biological role, activation of RuBisCO (ribulose-1,5-bisphosphate carboxylase/oxygenase; EC 4.1.1.39) involves the ATP-dependent carboxylation of the epsilon-amino group of lysine leading to a carbamate structure. This Arabidopsis thaliana (Mouse-ear cress) protein is Ribulose bisphosphate carboxylase/oxygenase activase, chloroplastic (RCA).